The following is a 465-amino-acid chain: Na(+)-translocating NADH-quinone reductase subunit A (465 aa).

It belongs to the NqrA family. Composed of six subunits; NqrA, NqrB, NqrC, NqrD, NqrE and NqrF.

It catalyses the reaction a ubiquinone + n Na(+)(in) + NADH + H(+) = a ubiquinol + n Na(+)(out) + NAD(+). In terms of biological role, NQR complex catalyzes the reduction of ubiquinone-1 to ubiquinol by two successive reactions, coupled with the transport of Na(+) ions from the cytoplasm to the periplasm. NqrA to NqrE are probably involved in the second step, the conversion of ubisemiquinone to ubiquinol. The polypeptide is Na(+)-translocating NADH-quinone reductase subunit A (Chlamydia trachomatis serovar L2 (strain ATCC VR-902B / DSM 19102 / 434/Bu)).